A 227-amino-acid polypeptide reads, in one-letter code: Phosphoribosylformylglycinamidine synthase subunit PurQ (227 aa).

In terms of domain architecture, Glutamine amidotransferase type-1 spans 2–226 (KFAVIQFPGS…VQAWKEEQVN (225 aa)). The active-site Nucleophile is Cys86. Catalysis depends on residues His195 and Glu197.

Part of the FGAM synthase complex composed of 1 PurL, 1 PurQ and 2 PurS subunits.

The protein resides in the cytoplasm. The catalysed reaction is N(2)-formyl-N(1)-(5-phospho-beta-D-ribosyl)glycinamide + L-glutamine + ATP + H2O = 2-formamido-N(1)-(5-O-phospho-beta-D-ribosyl)acetamidine + L-glutamate + ADP + phosphate + H(+). The enzyme catalyses L-glutamine + H2O = L-glutamate + NH4(+). The protein operates within purine metabolism; IMP biosynthesis via de novo pathway; 5-amino-1-(5-phospho-D-ribosyl)imidazole from N(2)-formyl-N(1)-(5-phospho-D-ribosyl)glycinamide: step 1/2. Part of the phosphoribosylformylglycinamidine synthase complex involved in the purines biosynthetic pathway. Catalyzes the ATP-dependent conversion of formylglycinamide ribonucleotide (FGAR) and glutamine to yield formylglycinamidine ribonucleotide (FGAM) and glutamate. The FGAM synthase complex is composed of three subunits. PurQ produces an ammonia molecule by converting glutamine to glutamate. PurL transfers the ammonia molecule to FGAR to form FGAM in an ATP-dependent manner. PurS interacts with PurQ and PurL and is thought to assist in the transfer of the ammonia molecule from PurQ to PurL. The chain is Phosphoribosylformylglycinamidine synthase subunit PurQ from Listeria welshimeri serovar 6b (strain ATCC 35897 / DSM 20650 / CCUG 15529 / CIP 8149 / NCTC 11857 / SLCC 5334 / V8).